We begin with the raw amino-acid sequence, 555 residues long: Glutamine--tRNA ligase (555 aa).

The 'HIGH' region motif lies at 34–44; that stretch reads PEPNGYLHIGH. Residues 35–37 and 41–47 each bind ATP; these read EPN and HIGHAKS. Residues Asp67 and Tyr212 each coordinate L-glutamine. ATP-binding positions include Thr231, 261–262, and 269–271; these read RL and MSK. Positions 268-272 match the 'KMSKS' region motif; sequence VMSKR. The interval 317–324 is interaction with tRNA; it reads TKQDNTIE.

The protein belongs to the class-I aminoacyl-tRNA synthetase family. As to quaternary structure, monomer.

Its subcellular location is the cytoplasm. The enzyme catalyses tRNA(Gln) + L-glutamine + ATP = L-glutaminyl-tRNA(Gln) + AMP + diphosphate. The sequence is that of Glutamine--tRNA ligase from Salmonella schwarzengrund (strain CVM19633).